Reading from the N-terminus, the 525-residue chain is MSEYLQQIAKRRTFAIISHPDAGKTTITEKMLLFGNAIKTAGTVKAKKSGIHATSDWMEMEKQRGISITTSVMQFPYNGRIINLLDTPGHEDFSEDTYRTLTAVDSALMVVDAVKGVEDRTIKLMNVCRLRDTPIVTFMNKFDRDTRDPLELLDEVENILKIKCAPINWPIGMGKYFKGVYDLYNDEVTLFETGHGHEIYPYKKIKGLANAKDAIGIDLYEDLEMEIDLVRGASHEFDEQEFLEGNLTPVYFGTALSNFGVKEMMDGFTRYAPAPQHREADQRVVAADEQKLTGFVFKIQANMDEKHRNRIAFFRICSGKYEKGMKIFHERTGKQMQISKALTFMAGEREQVEEGYAGDIIGLHNHGSIQIGDSFTQGEKLKFKGIPNFAPEIFKRVKLNDPLKMKALQKGLVQLSEEGATQVFKPFISNDLVLGAVGVLQFDVVAQRLASEYNVKCSYEGVNVTLARWIFCNDEKKLNDFKKKYEVNLAYDGAGYLTYLAPTGVNLQLAQEKNPDIIFSATREH.

Positions 9 to 276 (AKRRTFAIIS…GFTRYAPAPQ (268 aa)) constitute a tr-type G domain. Residues 18–25 (SHPDAGKT), 86–90 (DTPGH), and 140–143 (NKFD) contribute to the GTP site.

This sequence belongs to the TRAFAC class translation factor GTPase superfamily. Classic translation factor GTPase family. PrfC subfamily.

The protein localises to the cytoplasm. Increases the formation of ribosomal termination complexes and stimulates activities of RF-1 and RF-2. It binds guanine nucleotides and has strong preference for UGA stop codons. It may interact directly with the ribosome. The stimulation of RF-1 and RF-2 is significantly reduced by GTP and GDP, but not by GMP. This chain is Peptide chain release factor 3, found in Francisella tularensis subsp. tularensis (strain FSC 198).